An 81-amino-acid chain; its full sequence is Conotoxin Lt6.4 (81 aa).

The N-terminal stretch at 1–19 is a signal peptide; it reads MKLVLAIVLILMFLSLSAG. The propeptide occupies 20–42; sequence AETSDNGVSRGGHRPQYWPVTPP. Cystine bridges form between Cys-46–Cys-60, Cys-53–Cys-65, and Cys-59–Cys-80.

Belongs to the conotoxin I3 superfamily. Expressed by the venom duct.

The protein resides in the secreted. This is Conotoxin Lt6.4 from Conus litteratus (Lettered cone).